Reading from the N-terminus, the 108-residue chain is Kanamycin resistance protein (108 aa).

The N-acetyltransferase domain occupies 1 to 99 (SRTLLLERGR…PAVYMVQTRQ (99 aa)).

The sequence is that of Kanamycin resistance protein from Rhizobium radiobacter (Agrobacterium tumefaciens).